Reading from the N-terminus, the 312-residue chain is Acetyl-coenzyme A carboxylase carboxyl transferase subunit alpha (312 aa).

The 255-residue stretch at Leu-32 to Glu-286 folds into the CoA carboxyltransferase C-terminal domain.

This sequence belongs to the AccA family. Acetyl-CoA carboxylase is a heterohexamer composed of biotin carboxyl carrier protein (AccB), biotin carboxylase (AccC) and two subunits each of ACCase subunit alpha (AccA) and ACCase subunit beta (AccD).

Its subcellular location is the cytoplasm. It catalyses the reaction N(6)-carboxybiotinyl-L-lysyl-[protein] + acetyl-CoA = N(6)-biotinyl-L-lysyl-[protein] + malonyl-CoA. It participates in lipid metabolism; malonyl-CoA biosynthesis; malonyl-CoA from acetyl-CoA: step 1/1. Functionally, component of the acetyl coenzyme A carboxylase (ACC) complex. First, biotin carboxylase catalyzes the carboxylation of biotin on its carrier protein (BCCP) and then the CO(2) group is transferred by the carboxyltransferase to acetyl-CoA to form malonyl-CoA. This chain is Acetyl-coenzyme A carboxylase carboxyl transferase subunit alpha, found in Thermus thermophilus (strain ATCC BAA-163 / DSM 7039 / HB27).